A 239-amino-acid polypeptide reads, in one-letter code: Fatty acid metabolism regulator protein (239 aa).

An HTH gntR-type domain is found at 6–74 (QSPAGFAEEY…HGKPTKVNNF (69 aa)). The H-T-H motif DNA-binding region spans 34 to 53 (ERELSELIGVTRTTLREVLQ).

Homodimer.

The protein resides in the cytoplasm. In terms of biological role, multifunctional regulator of fatty acid metabolism. This chain is Fatty acid metabolism regulator protein, found in Yersinia enterocolitica serotype O:8 / biotype 1B (strain NCTC 13174 / 8081).